Here is an 814-residue protein sequence, read N- to C-terminus: Exostosin-like-3 homolog (814 aa).

Over 1-14 (MAIKLNGSSRSFVP) the chain is Cytoplasmic. A helical; Signal-anchor for type II membrane protein transmembrane segment spans residues 15 to 35 (SLRVSAFLIFIFFVITYIIIY). Residues N36, N227, N297, N322, N454, and N492 are each glycosylated (N-linked (GlcNAc...) asparagine). Residues 36–814 (NVSFSEPSWI…QNHQKCFKYV (779 aa)) lie on the Lumenal side of the membrane. UDP-N-acetyl-alpha-D-glucosamine-binding residues include R570, N595, N620, R625, D641, D642, and D643. D643 contacts Mn(2+). N685 is a glycosylation site (N-linked (GlcNAc...) asparagine). Cysteines 726 and 774 form a disulfide. UDP-N-acetyl-alpha-D-glucosamine is bound by residues E727, D728, and R771. The active site involves D728.

Belongs to the glycosyltransferase 47 family. Interacts with rib-1. It depends on Mn(2+) as a cofactor.

The protein localises to the endoplasmic reticulum membrane. The protein resides in the golgi apparatus membrane. It catalyses the reaction 3-O-(beta-D-GlcA-(1-&gt;3)-beta-D-Gal-(1-&gt;3)-beta-D-Gal-(1-&gt;4)-beta-D-Xyl)-L-seryl-[protein] + UDP-N-acetyl-alpha-D-glucosamine = 3-O-(alpha-D-GlcNAc-(1-&gt;4)-beta-D-GlcA-(1-&gt;3)-beta-D-Gal-(1-&gt;3)-beta-D-Gal-(1-&gt;4)-beta-D-Xyl)-L-seryl-[protein] + UDP + H(+). The catalysed reaction is 3-O-{[(1-&gt;4)-beta-D-GlcA-(1-&gt;4)-alpha-D-GlcNAc](n)-(1-&gt;4)-beta-D-GlcA-(1-&gt;3)-beta-D-Gal-(1-&gt;3)-beta-D-Gal-(1-&gt;4)-beta-D-Xyl}-L-seryl-[protein] + UDP-N-acetyl-alpha-D-glucosamine = 3-O-{alpha-D-GlcNAc-[(1-&gt;4)-beta-D-GlcA-(1-&gt;4)-alpha-D-GlcNAc](n)-(1-&gt;4)-beta-D-GlcA-(1-&gt;3)-beta-D-Gal-(1-&gt;3)-beta-D-Gal-(1-&gt;4)-beta-D-Xyl}-L-seryl-[protein] + UDP + H(+). The enzyme catalyses 3-O-{alpha-D-GlcNAc-[(1-&gt;4)-beta-D-GlcA-(1-&gt;4)-alpha-D-GlcNAc](n)-(1-&gt;4)-beta-D-GlcA-(1-&gt;3)-beta-D-Gal-(1-&gt;3)-beta-D-Gal-(1-&gt;4)-beta-D-Xyl}-L-seryl-[protein] + UDP-alpha-D-glucuronate = 3-O-{[(1-&gt;4)-beta-D-GlcA-(1-&gt;4)-alpha-D-GlcNAc](n+1)-(1-&gt;4)-beta-D-GlcA-(1-&gt;3)-beta-D-Gal-(1-&gt;3)-beta-D-Gal-(1-&gt;4)-beta-D-Xyl}-L-seryl-[protein] + UDP + H(+). The protein operates within glycan metabolism; heparan sulfate biosynthesis. Binding to rib-1 is required for GlcAT-II activity and for increasing GlcNAc-II activity in vitro. In terms of biological role, glycosyltransferase required for the biosynthesis of heparan sulfate. Initiates heparan sulfate synthesis by transferring GlcNAc to the (GlcA-Gal-Gal-Xyl-)Ser core linker (GlcNAcT-I activity). In association with rib-1, is also responsible for the alternating addition of beta-1-4-linked glucuronic acid (GlcA) and alpha-1-4-linked N-acetylglucosamine (GlcNAc) units to nascent heparan sulfate chains (GlcNAcT-II and GlcAT-II activities). Required for normal ventral epidermal enclosure during the early stages of embryonic development. In addition, involved in the elongation of the pharyngeal isthmus during the later stages of embryonic development. Involved in the directed migration of hermaphrodite-specific neurons. The sequence is that of Exostosin-like-3 homolog (rib-2) from Caenorhabditis elegans.